Consider the following 484-residue polypeptide: Glycogen synthase (484 aa).

Residue Lys20 coordinates ADP-alpha-D-glucose.

Belongs to the glycosyltransferase 1 family. Bacterial/plant glycogen synthase subfamily.

The enzyme catalyses [(1-&gt;4)-alpha-D-glucosyl](n) + ADP-alpha-D-glucose = [(1-&gt;4)-alpha-D-glucosyl](n+1) + ADP + H(+). The protein operates within glycan biosynthesis; glycogen biosynthesis. In terms of biological role, synthesizes alpha-1,4-glucan chains using ADP-glucose. The chain is Glycogen synthase from Vibrio atlanticus (strain LGP32) (Vibrio splendidus (strain Mel32)).